The following is a 390-amino-acid chain: Probable L-tyrosine/L-aspartate decarboxylase (390 aa).

Lysine 239 is subject to N6-(pyridoxal phosphate)lysine.

It belongs to the group II decarboxylase family. MfnA subfamily. The cofactor is pyridoxal 5'-phosphate.

It catalyses the reaction L-tyrosine + H(+) = tyramine + CO2. It carries out the reaction L-aspartate + H(+) = beta-alanine + CO2. The protein operates within cofactor biosynthesis; methanofuran biosynthesis. It participates in cofactor biosynthesis; coenzyme A biosynthesis. Functionally, catalyzes the decarboxylation of L-tyrosine to produce tyramine for methanofuran biosynthesis. Can also catalyze the decarboxylation of L-aspartate to produce beta-alanine for coenzyme A (CoA) biosynthesis. This Methanococcus aeolicus (strain ATCC BAA-1280 / DSM 17508 / OCM 812 / Nankai-3) protein is Probable L-tyrosine/L-aspartate decarboxylase.